Here is a 648-residue protein sequence, read N- to C-terminus: Serine/threonine-protein phosphatase 1 regulatory subunit PIG1 (648 aa).

Low complexity predominate over residues 20-51 (STSSFVSSTTSNSFSPLEDSTSASSSTSSSSS). The segment at 20-52 (STSSFVSSTTSNSFSPLEDSTSASSSTSSSSSG) is disordered. The region spanning 201-331 (HSLELSDPVS…NNDYKNYEIT (131 aa)) is the CBM21 domain. Positions 593–609 (RESSSPEISPLNTTTSL) are enriched in polar residues. A disordered region spans residues 593–629 (RESSSPEISPLNTTTSLPFFPGDNMSDSSGEYEERTS).

Its function is as follows. Regulates the activity of glycogen synthase. It is most probably a regulatory subunit for protein phosphatase type 1. The chain is Serine/threonine-protein phosphatase 1 regulatory subunit PIG1 (PIG1) from Saccharomyces cerevisiae (strain ATCC 204508 / S288c) (Baker's yeast).